The chain runs to 513 residues: ATP synthase subunit alpha (513 aa).

169–176 (GDRQTGKT) contacts ATP.

Belongs to the ATPase alpha/beta chains family. In terms of assembly, F-type ATPases have 2 components, CF(1) - the catalytic core - and CF(0) - the membrane proton channel. CF(1) has five subunits: alpha(3), beta(3), gamma(1), delta(1), epsilon(1). CF(0) has three main subunits: a(1), b(2) and c(9-12). The alpha and beta chains form an alternating ring which encloses part of the gamma chain. CF(1) is attached to CF(0) by a central stalk formed by the gamma and epsilon chains, while a peripheral stalk is formed by the delta and b chains.

Its subcellular location is the cell inner membrane. The enzyme catalyses ATP + H2O + 4 H(+)(in) = ADP + phosphate + 5 H(+)(out). Functionally, produces ATP from ADP in the presence of a proton gradient across the membrane. The alpha chain is a regulatory subunit. This chain is ATP synthase subunit alpha, found in Idiomarina loihiensis (strain ATCC BAA-735 / DSM 15497 / L2-TR).